The chain runs to 344 residues: Inositol 2-dehydrogenase/D-chiro-inositol 3-dehydrogenase (344 aa).

Belongs to the Gfo/Idh/MocA family. As to quaternary structure, homotetramer.

It catalyses the reaction myo-inositol + NAD(+) = scyllo-inosose + NADH + H(+). The catalysed reaction is 1D-chiro-inositol + NAD(+) = scyllo-inosine + NADH + H(+). The protein operates within polyol metabolism; myo-inositol degradation into acetyl-CoA; acetyl-CoA from myo-inositol: step 1/7. Its function is as follows. Involved in the oxidation of myo-inositol (MI) and D-chiro-inositol (DCI) to 2-keto-myo-inositol (2KMI or 2-inosose) and 1-keto-D-chiro-inositol (1KDCI), respectively. This chain is Inositol 2-dehydrogenase/D-chiro-inositol 3-dehydrogenase, found in Bacillus licheniformis (strain ATCC 14580 / DSM 13 / JCM 2505 / CCUG 7422 / NBRC 12200 / NCIMB 9375 / NCTC 10341 / NRRL NRS-1264 / Gibson 46).